Reading from the N-terminus, the 210-residue chain is Thiamine-phosphate synthase (210 aa).

Residues 38-42 (QFREK) and Asn70 each bind 4-amino-2-methyl-5-(diphosphooxymethyl)pyrimidine. Residues Asp71 and Asp90 each contribute to the Mg(2+) site. 4-amino-2-methyl-5-(diphosphooxymethyl)pyrimidine is bound at residue Ser107. Residue 132–134 (TKT) participates in 2-[(2R,5Z)-2-carboxy-4-methylthiazol-5(2H)-ylidene]ethyl phosphate binding. Position 135 (Lys135) interacts with 4-amino-2-methyl-5-(diphosphooxymethyl)pyrimidine. 183–184 (IS) contributes to the 2-[(2R,5Z)-2-carboxy-4-methylthiazol-5(2H)-ylidene]ethyl phosphate binding site.

This sequence belongs to the thiamine-phosphate synthase family. Mg(2+) is required as a cofactor.

The catalysed reaction is 2-[(2R,5Z)-2-carboxy-4-methylthiazol-5(2H)-ylidene]ethyl phosphate + 4-amino-2-methyl-5-(diphosphooxymethyl)pyrimidine + 2 H(+) = thiamine phosphate + CO2 + diphosphate. It carries out the reaction 2-(2-carboxy-4-methylthiazol-5-yl)ethyl phosphate + 4-amino-2-methyl-5-(diphosphooxymethyl)pyrimidine + 2 H(+) = thiamine phosphate + CO2 + diphosphate. The enzyme catalyses 4-methyl-5-(2-phosphooxyethyl)-thiazole + 4-amino-2-methyl-5-(diphosphooxymethyl)pyrimidine + H(+) = thiamine phosphate + diphosphate. The protein operates within cofactor biosynthesis; thiamine diphosphate biosynthesis; thiamine phosphate from 4-amino-2-methyl-5-diphosphomethylpyrimidine and 4-methyl-5-(2-phosphoethyl)-thiazole: step 1/1. Its function is as follows. Condenses 4-methyl-5-(beta-hydroxyethyl)thiazole monophosphate (THZ-P) and 2-methyl-4-amino-5-hydroxymethyl pyrimidine pyrophosphate (HMP-PP) to form thiamine monophosphate (TMP). This chain is Thiamine-phosphate synthase, found in Archaeoglobus fulgidus (strain ATCC 49558 / DSM 4304 / JCM 9628 / NBRC 100126 / VC-16).